The chain runs to 227 residues: Ubiquitin-conjugating enzyme E2 6 (227 aa).

The Cytoplasmic portion of the chain corresponds to Met-1–Arg-206. Residues Gly-5–Glu-163 enclose the UBC core domain. Residue Cys-87 is the Glycyl thioester intermediate of the active site. The helical transmembrane segment at Trp-207–Ala-225 threads the bilayer.

Belongs to the ubiquitin-conjugating enzyme family.

The protein localises to the endoplasmic reticulum membrane. The enzyme catalyses S-ubiquitinyl-[E1 ubiquitin-activating enzyme]-L-cysteine + [E2 ubiquitin-conjugating enzyme]-L-cysteine = [E1 ubiquitin-activating enzyme]-L-cysteine + S-ubiquitinyl-[E2 ubiquitin-conjugating enzyme]-L-cysteine.. It functions in the pathway protein modification; protein ubiquitination. Catalyzes the covalent attachment of ubiquitin to other proteins. Functions in degradation of misfolded or regulated proteins localized in the endoplasmic reticulum (ER) lumen or membrane via the ubiquitin-proteasome system. Cognate E2 conjugating enzyme for the doa10 ubiquitin ligase complex, which is part of the ERAD-C pathway responsible for the rapid degradation of membrane proteins with misfolded cytoplasmic domains. The chain is Ubiquitin-conjugating enzyme E2 6 (ubc6) from Schizosaccharomyces pombe (strain 972 / ATCC 24843) (Fission yeast).